Here is a 338-residue protein sequence, read N- to C-terminus: 1-aminocyclopropane-1-carboxylate deaminase (338 aa).

Lys51 is modified (N6-(pyridoxal phosphate)lysine). Catalysis depends on Ser78, which acts as the Nucleophile.

It belongs to the ACC deaminase/D-cysteine desulfhydrase family. In terms of assembly, homotrimer. The cofactor is pyridoxal 5'-phosphate.

The catalysed reaction is 1-aminocyclopropane-1-carboxylate + H2O = 2-oxobutanoate + NH4(+). Functionally, catalyzes a cyclopropane ring-opening reaction, the irreversible conversion of 1-aminocyclopropane-1-carboxylate (ACC) to ammonia and alpha-ketobutyrate. Allows growth on ACC as a nitrogen source. This chain is 1-aminocyclopropane-1-carboxylate deaminase, found in Pseudomonas putida (Arthrobacter siderocapsulatus).